The following is a 390-amino-acid chain: GTPase Obg (390 aa).

Residues 1 to 159 (MKFVDEAAIL…RDILLELLLL (159 aa)) form the Obg domain. The OBG-type G domain occupies 160–333 (ADVGMLGLPN…LCWDVMKFIN (174 aa)). Residues 166–173 (GLPNAGKS), 191–195 (FTTLV), 213–216 (DIPG), 283–286 (NKID), and 314–316 (SAV) contribute to the GTP site. Mg(2+) contacts are provided by Ser-173 and Thr-193. Residues 366-384 (AEADDDWDDDWDEEDDEGV) are compositionally biased toward acidic residues. A disordered region spans residues 366 to 390 (AEADDDWDDDWDEEDDEGVEIIYQK).

The protein belongs to the TRAFAC class OBG-HflX-like GTPase superfamily. OBG GTPase family. As to quaternary structure, monomer. It depends on Mg(2+) as a cofactor.

The protein resides in the cytoplasm. Functionally, an essential GTPase which binds GTP, GDP and possibly (p)ppGpp with moderate affinity, with high nucleotide exchange rates and a fairly low GTP hydrolysis rate. Plays a role in control of the cell cycle, stress response, ribosome biogenesis and in those bacteria that undergo differentiation, in morphogenesis control. The protein is GTPase Obg of Serratia proteamaculans (strain 568).